The sequence spans 372 residues: Putative neuropeptide precursor protein (372 aa).

Residues 1–17 (MLLFSLTAITAVLAVSA) form the signal peptide. 2 disordered regions span residues 18 to 89 (VPTP…SNGE) and 136 to 208 (VTKS…KRDS). The segment covering 19-31 (PTPSNNKDGSTIS) has biased composition (polar residues). A compositionally biased stretch (basic and acidic residues) spans 38 to 57 (DQTKDDNRSLFLNKSDKNDL). Positions 72–89 (GYDQTVDQRFDSPQSNGE) are enriched in polar residues. Over residues 177–191 (GGAAASAKTATKNSG) the composition is skewed to low complexity.

Post-translationally, may be proteolytically processed to give rise to a number of active peptides. Detected in the brain and frontal ganglion and in the axons connecting to the corpus cardiacum and corpus allatum (at protein level). Detected in the brain-subesophageal ganglion (brain-SG) complex, fat body, midgut and ovary. Expression in the brain-SG complex is 2-3 times higher than in the other tissues.

The protein resides in the cytoplasm. It localises to the secreted. The protein is Putative neuropeptide precursor protein of Bombyx mori (Silk moth).